The primary structure comprises 398 residues: Serine/threonine-protein kinase 32A (398 aa).

A lipid anchor (N-myristoyl glycine) is attached at glycine 2. The region spanning 23–281 (FEILRAIGKG…LTDIQNFPYM (259 aa)) is the Protein kinase domain. ATP is bound by residues 29–37 (IGKGSFGKV) and lysine 52. The Proton acceptor role is filled by aspartate 146. Residues 379–398 (ALEQTKNNTEEEEDGQNNNL) form a disordered region. The segment covering 388-398 (EEEEDGQNNNL) has biased composition (acidic residues).

It belongs to the protein kinase superfamily. Ser/Thr protein kinase family. Requires Mg(2+) as cofactor.

Its subcellular location is the cell membrane. It catalyses the reaction L-seryl-[protein] + ATP = O-phospho-L-seryl-[protein] + ADP + H(+). The catalysed reaction is L-threonyl-[protein] + ATP = O-phospho-L-threonyl-[protein] + ADP + H(+). The sequence is that of Serine/threonine-protein kinase 32A from Mus musculus (Mouse).